The sequence spans 103 residues: Large ribosomal subunit protein uL24 (103 aa).

This sequence belongs to the universal ribosomal protein uL24 family. In terms of assembly, part of the 50S ribosomal subunit.

In terms of biological role, one of two assembly initiator proteins, it binds directly to the 5'-end of the 23S rRNA, where it nucleates assembly of the 50S subunit. One of the proteins that surrounds the polypeptide exit tunnel on the outside of the subunit. The sequence is that of Large ribosomal subunit protein uL24 from Sinorhizobium medicae (strain WSM419) (Ensifer medicae).